The following is a 313-amino-acid chain: Extracellular metalloprotease (313 aa).

The first 34 residues, 1-34 (MKLVPRFRKQWFAYLTVLCLALAAAVSFGVPAKA), serve as a signal peptide directing secretion. Residues 35 to 74 (AENPQTSVSNTGKEADATKNQTSKADQVSAPYEGTGKTSK) form a disordered region. Residues 35 to 93 (AENPQTSVSNTGKEADATKNQTSKADQVSAPYEGTGKTSKSLYGGQTELEKNIQTLQPS) constitute a propeptide that is removed on maturation. The span at 37-60 (NPQTSVSNTGKEADATKNQTSKAD) shows a compositional bias: polar residues. A disulfide bridge links C131 with C147. Catalysis depends on charge relay system residues H146 and S267.

It belongs to the peptidase S1B family. In terms of assembly, monomer.

The protein localises to the secreted. This Bacillus subtilis (strain 168) protein is Extracellular metalloprotease (mpr).